Reading from the N-terminus, the 356-residue chain is S-adenosylmethionine:tRNA ribosyltransferase-isomerase (356 aa).

This sequence belongs to the QueA family. Monomer.

It is found in the cytoplasm. It catalyses the reaction 7-aminomethyl-7-carbaguanosine(34) in tRNA + S-adenosyl-L-methionine = epoxyqueuosine(34) in tRNA + adenine + L-methionine + 2 H(+). The protein operates within tRNA modification; tRNA-queuosine biosynthesis. Its function is as follows. Transfers and isomerizes the ribose moiety from AdoMet to the 7-aminomethyl group of 7-deazaguanine (preQ1-tRNA) to give epoxyqueuosine (oQ-tRNA). This Shigella boydii serotype 18 (strain CDC 3083-94 / BS512) protein is S-adenosylmethionine:tRNA ribosyltransferase-isomerase.